The primary structure comprises 445 residues: Gamma conglutin 2 (445 aa).

The first 33 residues, 1 to 33 (MAQNMAPIFHFIAISLSCSFLFVLSSSQDSQSL), serve as a signal peptide directing secretion. Residues 60–425 (HWANIHKRTP…DFAKSRVEFN (366 aa)) form the Peptidase A1 domain. Cystine bridges form between cysteine 88/cysteine 178, cysteine 102/cysteine 115, cysteine 107/cysteine 133, cysteine 118/cysteine 128, and cysteine 346/cysteine 387. Asparagine 130 is a glycosylation site (N-linked (GlcNAc...) asparagine).

This sequence belongs to the peptidase A1 family. Two-subunit monomeric unit made of alpha and beta subunits coupled by disulfide bonds (at pH 4.5 and under non-reducing conditions). Can also form oligomers including dimer, tetramer and cyclic hexamer (trimer of dimers) (at pH &gt; 5.5). Component of globulins complexes which accumulate in seeds. Interacts with flavonoids (e.g. apigenin glucosides) present in globulins complexes. Glycosylated on alpha chain.

The protein localises to the secreted. It localises to the extracellular space. Its function is as follows. Sulfur-rich seed storage protein that remains undegraded at germination. This chain is Gamma conglutin 2, found in Lupinus angustifolius (Narrow-leaved blue lupine).